Reading from the N-terminus, the 1232-residue chain is uncharacterized protein (1232 aa).

This sequence belongs to the Mg-chelatase subunit H family.

This is an uncharacterized protein from Methanocaldococcus jannaschii (strain ATCC 43067 / DSM 2661 / JAL-1 / JCM 10045 / NBRC 100440) (Methanococcus jannaschii).